The following is a 416-amino-acid chain: Gamma-glutamyl phosphate reductase (416 aa).

The protein belongs to the gamma-glutamyl phosphate reductase family.

It localises to the cytoplasm. It carries out the reaction L-glutamate 5-semialdehyde + phosphate + NADP(+) = L-glutamyl 5-phosphate + NADPH + H(+). It participates in amino-acid biosynthesis; L-proline biosynthesis; L-glutamate 5-semialdehyde from L-glutamate: step 2/2. Its function is as follows. Catalyzes the NADPH-dependent reduction of L-glutamate 5-phosphate into L-glutamate 5-semialdehyde and phosphate. The product spontaneously undergoes cyclization to form 1-pyrroline-5-carboxylate. This chain is Gamma-glutamyl phosphate reductase, found in Streptococcus pyogenes serotype M3 (strain ATCC BAA-595 / MGAS315).